The primary structure comprises 140 residues: Large ribosomal subunit protein uL16 (140 aa).

A compositionally biased stretch (basic residues) spans 1–17 (MPLMPKRVKHRKMHRGS). Residues 1–21 (MPLMPKRVKHRKMHRGSRSGN) form a disordered region.

Belongs to the universal ribosomal protein uL16 family. As to quaternary structure, part of the 50S ribosomal subunit.

Functionally, binds 23S rRNA and is also seen to make contacts with the A and possibly P site tRNAs. The protein is Large ribosomal subunit protein uL16 of Akkermansia muciniphila (strain ATCC BAA-835 / DSM 22959 / JCM 33894 / BCRC 81048 / CCUG 64013 / CIP 107961 / Muc).